The chain runs to 484 residues: MQEGKNIWSLILAAIRKELSEEEFYIWFENLYFIDATDENIKISAPNSFHKNQVEKRFAKRIKEILIEKGHNTINVEFINSPNDSKTHNMESKNISLKDISTQQDSPEKRTTFKIHTKNIIESTKQYTTKEEIHTKYRNPFLKKKYTFENFITGPNNKLAYNASLSIAKNPGKKYNPCLIYGGVGLGKTHLLQSIGNKTEELHKEFKILYVTAENFLNEFVESIKTNETKRFKKKYRYLDMLLLDDIHDLQKKEGIQEELFHTFNALYEDNKQMVFTCDRQPSELINFTDRLKSRFTRGLNVDISKPNFELRVAIIEKKAEEDGIKVPKSILNLVAKKVTTNIRDLEAAVTKLKAHIDLEDIEIDTSTVDKIIKEIIVYENDNTNTHNKINIESIKKVILRELKLTNKDIEGNSKKPEITKARHIYAYLLRNFTELSTIEIGKIIGGKTHSTVLYSINKIDKERNNDLEINNLIIELMNKINKK.

Positions M1–T73 are domain I, interacts with DnaA modulators. Positions T73–P140 are domain II. The interval F141–I357 is domain III, AAA+ region. The ATP site is built by G185, G187, K188, and T189. The interval D358–K484 is domain IV, binds dsDNA.

It belongs to the DnaA family. Oligomerizes as a right-handed, spiral filament on DNA at oriC.

The protein localises to the cytoplasm. In terms of biological role, plays an essential role in the initiation and regulation of chromosomal replication. ATP-DnaA binds to the origin of replication (oriC) to initiate formation of the DNA replication initiation complex once per cell cycle. Binds the DnaA box (a 9 base pair repeat at the origin) and separates the double-stranded (ds)DNA. Forms a right-handed helical filament on oriC DNA; dsDNA binds to the exterior of the filament while single-stranded (ss)DNA is stabiized in the filament's interior. The ATP-DnaA-oriC complex binds and stabilizes one strand of the AT-rich DNA unwinding element (DUE), permitting loading of DNA polymerase. After initiation quickly degrades to an ADP-DnaA complex that is not apt for DNA replication. Binds acidic phospholipids. This is Chromosomal replication initiator protein DnaA from Borrelia hermsii (strain HS1 / DAH).